The chain runs to 349 residues: UDP-3-O-acylglucosamine N-acyltransferase (349 aa).

Catalysis depends on His-246, which acts as the Proton acceptor.

This sequence belongs to the transferase hexapeptide repeat family. LpxD subfamily. As to quaternary structure, homotrimer.

It carries out the reaction a UDP-3-O-[(3R)-3-hydroxyacyl]-alpha-D-glucosamine + a (3R)-hydroxyacyl-[ACP] = a UDP-2-N,3-O-bis[(3R)-3-hydroxyacyl]-alpha-D-glucosamine + holo-[ACP] + H(+). It participates in bacterial outer membrane biogenesis; LPS lipid A biosynthesis. In terms of biological role, catalyzes the N-acylation of UDP-3-O-acylglucosamine using 3-hydroxyacyl-ACP as the acyl donor. Is involved in the biosynthesis of lipid A, a phosphorylated glycolipid that anchors the lipopolysaccharide to the outer membrane of the cell. This Trichormus variabilis (strain ATCC 29413 / PCC 7937) (Anabaena variabilis) protein is UDP-3-O-acylglucosamine N-acyltransferase.